A 186-amino-acid polypeptide reads, in one-letter code: Meiotically up-regulated gene 163 protein (186 aa).

Its subcellular location is the mitochondrion. Functionally, has a role in meiosis. This chain is Meiotically up-regulated gene 163 protein (mug163), found in Schizosaccharomyces pombe (strain 972 / ATCC 24843) (Fission yeast).